A 378-amino-acid polypeptide reads, in one-letter code: MYKILKTDGRAKRAEFTTVHGTVQTPVFMNVGTVAAIKGAVATTDLQQIGTQIELSNTYHLHVRPGDKIIKQLGGLHKFMNWDKPILTDSGGFQVFSLAGLRKIKEEGVTFQSHIDGHKIFMGPEESMQIQSNLGSTIAMAFDECAPAKADRKYIQNSVDRTYRWLERCKKEMARLNSLPDTVNPDQMLFGIDQGGVFNDIRIDHAKRISELDLDGYAVGGLAVGETHEEMYDVLDNVVPYLPQDKPTYLMGVGTPANILESVDRGIDFFDCVYPSRNGRHGHVYTKFGKINLFNAKYETDTAPIEEGCGCPCCQNYSRAYVRHLLKAKEMLGMRLCVLHNLYYYNHLMTDIRAAIEEGRYAGFKEEALYQMKTYDKQ.

The active-site Proton acceptor is Asp-89. Residues 89–93 (DSGGF), Asp-143, Gln-194, and Gly-221 contribute to the substrate site. An RNA binding region spans residues 252-258 (GVGTPAN). Asp-271 serves as the catalytic Nucleophile. The Zn(2+) site is built by Cys-309, Cys-311, Cys-314, and His-340.

This sequence belongs to the queuine tRNA-ribosyltransferase family. In terms of assembly, homodimer. Within each dimer, one monomer is responsible for RNA recognition and catalysis, while the other monomer binds to the replacement base PreQ1. The cofactor is Zn(2+).

It carries out the reaction 7-aminomethyl-7-carbaguanine + guanosine(34) in tRNA = 7-aminomethyl-7-carbaguanosine(34) in tRNA + guanine. Its pathway is tRNA modification; tRNA-queuosine biosynthesis. In terms of biological role, catalyzes the base-exchange of a guanine (G) residue with the queuine precursor 7-aminomethyl-7-deazaguanine (PreQ1) at position 34 (anticodon wobble position) in tRNAs with GU(N) anticodons (tRNA-Asp, -Asn, -His and -Tyr). Catalysis occurs through a double-displacement mechanism. The nucleophile active site attacks the C1' of nucleotide 34 to detach the guanine base from the RNA, forming a covalent enzyme-RNA intermediate. The proton acceptor active site deprotonates the incoming PreQ1, allowing a nucleophilic attack on the C1' of the ribose to form the product. After dissociation, two additional enzymatic reactions on the tRNA convert PreQ1 to queuine (Q), resulting in the hypermodified nucleoside queuosine (7-(((4,5-cis-dihydroxy-2-cyclopenten-1-yl)amino)methyl)-7-deazaguanosine). The chain is Queuine tRNA-ribosyltransferase from Lachnospira eligens (strain ATCC 27750 / DSM 3376 / VPI C15-48 / C15-B4) (Eubacterium eligens).